A 314-amino-acid chain; its full sequence is tRNA pseudouridine synthase B (314 aa).

His-43 contributes to the substrate binding site. Catalysis depends on Asp-48, which acts as the Nucleophile. Tyr-76, Tyr-179, and Leu-200 together coordinate substrate.

The protein belongs to the pseudouridine synthase TruB family. Type 1 subfamily.

The catalysed reaction is uridine(55) in tRNA = pseudouridine(55) in tRNA. Its function is as follows. Responsible for synthesis of pseudouridine from uracil-55 in the psi GC loop of transfer RNAs. This is tRNA pseudouridine synthase B from Citrobacter koseri (strain ATCC BAA-895 / CDC 4225-83 / SGSC4696).